Here is a 230-residue protein sequence, read N- to C-terminus: MEGQRWLPLEANPEVTNQFLKQLGLHPNWQFVDVYGMEPELLSMVPRPVCAVLLLFPITEKYEVFRTEEEEKIKSQGQDVTSSVYFMKQTISNACGTIGLIHAIANNKDKMHFESGSTLKKFLEESVSMSPEERAKFLENYDAIRVTHETSAHEGQTEAPSIDEKVDLHFIALVHVDGHLYELDGRKPFPINHGKTSDETLLEDAIEVCKKFMERDPDELRFNAIALSAA.

One can recognise a UCH catalytic domain in the interval 5–229 (RWLPLEANPE…LRFNAIALSA (225 aa)). The tract at residues 8–13 (PLEANP) is interaction with ubiquitin. The Nucleophile role is filled by C95. Residue S130 is modified to Phosphoserine. The interaction with ubiquitin. Crossover loop which restricts access of large ubiquitin adducts to the active site stretch occupies residues 152 to 159 (AHEGQTEA). Catalysis depends on H169, which acts as the Proton donor. The segment at 219–224 (ELRFNA) is interaction with ubiquitin.

Belongs to the peptidase C12 family. In terms of assembly, preferentially binds diubiquitin; the interaction does not hydrolyze diubiquitin but, in vitro, inhibits the hydrolyzing activity on other substrates. As to expression, ubiquitously expressed, with highest levels in brain, liver, heart, thymus, kidney and testis. Highly expressed in the cauda epididymidis, in meiotic pachytene spermatocytes and post-meiotic spematids. In the retina, enriched in the photoreceptor inner segment.

The protein resides in the cytoplasm. It catalyses the reaction Thiol-dependent hydrolysis of ester, thioester, amide, peptide and isopeptide bonds formed by the C-terminal Gly of ubiquitin (a 76-residue protein attached to proteins as an intracellular targeting signal).. Its activity is regulated as follows. Inhibited by monoubiquitin and diubiquitin. In terms of biological role, deubiquitinating enzyme (DUB) that controls levels of cellular ubiquitin through processing of ubiquitin precursors and ubiquitinated proteins. Thiol protease that recognizes and hydrolyzes a peptide bond at the C-terminal glycine of either ubiquitin or NEDD8. Has a 10-fold preference for Arg and Lys at position P3'', and exhibits a preference towards 'Lys-48'-linked ubiquitin chains. Deubiquitinates ENAC in apical compartments, thereby regulating apical membrane recycling. Indirectly increases the phosphorylation of IGFIR, AKT and FOXO1 and promotes insulin-signaling and insulin-induced adipogenesis. Required for stress-response retinal, skeletal muscle and germ cell maintenance. May be involved in working memory. Can hydrolyze UBB(+1), a mutated form of ubiquitin which is not effectively degraded by the proteasome. In Mus musculus (Mouse), this protein is Ubiquitin carboxyl-terminal hydrolase isozyme L3 (Uchl3).